Here is a 500-residue protein sequence, read N- to C-terminus: Cytochrome P450 monooxygenase ausR (500 aa).

The helical transmembrane segment at 15 to 35 threads the bilayer; that stretch reads GVGLYILWTVAVLFVIFKLLA. Position 439 (Cys-439) interacts with heme.

Belongs to the cytochrome P450 family. The cofactor is heme.

The protein resides in the membrane. The protein operates within secondary metabolite biosynthesis; terpenoid biosynthesis. Cytochrome P450 monooxygenase; part of the gene cluster that mediates the biosynthesis of calidodehydroaustin, a fungal meroterpenoid. The first step of the pathway is the synthesis of 3,5-dimethylorsellinic acid by the polyketide synthase ausA. 3,5-dimethylorsellinic acid is then prenylated by the polyprenyl transferase ausN. Further epoxidation by the FAD-dependent monooxygenase ausM and cyclization by the probable terpene cyclase ausL lead to the formation of protoaustinoid A. Protoaustinoid A is then oxidized to spiro-lactone preaustinoid A3 by the combined action of the FAD-binding monooxygenases ausB and ausC, and the dioxygenase ausE. Acid-catalyzed keto-rearrangement and ring contraction of the tetraketide portion of preaustinoid A3 by ausJ lead to the formation of preaustinoid A4. The aldo-keto reductase ausK, with the help of ausH, is involved in the next step by transforming preaustinoid A4 into isoaustinone which is in turn hydroxylated by the P450 monooxygenase ausI to form austinolide. The cytochrome P450 monooxygenase ausG modifies austinolide to austinol. Austinol is further acetylated to austin by the O-acetyltransferase ausP, which spontaneously changes to dehydroaustin. The cytochrome P450 monooxygenase ausR then converts dehydroaustin is into 7-dehydrodehydroaustin. The hydroxylation catalyzed by ausR permits the O-acetyltransferase ausQ to add an additional acetyl group to the molecule, leading to the formation of acetoxydehydroaustin. The short chain dehydrogenase ausT catalyzes the reduction of the double bond present between carbon atoms 1 and 2 to convert 7-dehydrodehydroaustin into 1,2-dihydro-7-hydroxydehydroaustin. AusQ catalyzes not only an acetylation reaction but also the addition of the PKS ausV diketide product to 1,2-dihydro-7-hydroxydehydroaustin, forming precalidodehydroaustin. Finally, the iron/alpha-ketoglutarate-dependent dioxygenase converts precalidodehydroaustin into calidodehydroaustin. This Aspergillus calidoustus protein is Cytochrome P450 monooxygenase ausR.